Reading from the N-terminus, the 436-residue chain is 5-hydroxytryptamine receptor 6 (436 aa).

Residues 1-27 (MVPEPGPVNSSTPAWGPGPPPAPGGSG) lie on the Extracellular side of the membrane. The N-linked (GlcNAc...) asparagine glycan is linked to asparagine 9. The chain crosses the membrane as a helical span at residues 28-52 (WVAAALCVVIVLTAAANSLLIVLIC). Over 53 to 62 (TQPALRNTSN) the chain is Cytoplasmic. Residues 63-88 (FFLVSLFTSDLMVGLVVMPPAMLNAL) form a helical membrane-spanning segment. Topologically, residues 89 to 96 (YGRWVLAR) are extracellular. The chain crosses the membrane as a helical span at residues 97–122 (GLCLLWTAFDVMCCSASILNLCLISL). The cysteines at positions 99 and 180 are disulfide-linked. Residue aspartate 106 coordinates serotonin. The Cytoplasmic segment spans residues 123–142 (DRYLLILSPLRYKLRMTAPR). The chain crosses the membrane as a helical span at residues 143–167 (ALALILGAWSLAALASFLPLLLGWH). The Extracellular portion of the chain corresponds to 168–185 (ELGKARTPAPGQCRLLAS). The helical transmembrane segment at 186 to 209 (LPFVLVASGVTFFLPSGAICFTYC) threads the bilayer. Residues 210–266 (RILLAARKQAVQVASLTTGTAGQALETLQVPRTPRPGMESADSRRLATKHSRKALKA) lie on the Cytoplasmic side of the membrane. The helical transmembrane segment at 267-293 (SLTLGILLGMFFVTWLPFFVANIAQAV) threads the bilayer. Residue asparagine 288 participates in serotonin binding. Residues 294–299 (CDCISP) are Extracellular-facing. The chain crosses the membrane as a helical span at residues 300-323 (GLFDVLTWLGYCNSTMNPIIYPLF). The Cytoplasmic segment spans residues 324–436 (MRDFKRALGR…RYGRIHSVPP (113 aa)).

This sequence belongs to the G-protein coupled receptor 1 family. In terms of assembly, interacts with MTOR, RPTOR and NF1. Interacts with CDK5. Localized exclusively in the central nervous system, predominantly in the corpus striatum but also in various limbic and cortical regions.

The protein resides in the cell membrane. Functionally, G-protein coupled receptor for 5-hydroxytryptamine (serotonin), a biogenic hormone that functions as a neurotransmitter, a hormone and a mitogen. Also has a high affinity for tricyclic psychotropic drugs. Ligand binding causes a conformation change that triggers signaling via guanine nucleotide-binding proteins (G proteins) and modulates the activity of downstream effectors. HTR6 is coupled to G(s) G alpha proteins and mediates activation of adenylate cyclase activity. Controls pyramidal neurons migration during corticogenesis, through the regulation of CDK5 activity. Is an activator of mTOR signaling. The chain is 5-hydroxytryptamine receptor 6 (Htr6) from Rattus norvegicus (Rat).